A 394-amino-acid chain; its full sequence is Proliferation-associated protein 2G4 (394 aa).

Ser-2 is modified (N-acetylserine). Phosphoserine is present on Ser-2. The interval 2–48 is necessary for nucleolar localization; the sequence is SGEDEQQEQTIAEDLVVTKYKMGGDIANRVLRSLVEASSSGVSVLSL. An RNA-binding region spans residues 46–54; that stretch reads LSLCEKGDA. Residue Lys-298 forms a Glycyl lysine isopeptide (Lys-Gly) (interchain with G-Cter in SUMO2) linkage. Positions 301–394 are necessary for nucleolar localization; that stretch reads LLQPFNVLYE…ETLEENGAGD (94 aa). Ser-335 is modified (phosphoserine). Positions 358 to 394 are disordered; sequence LQSSASRKTQKKKKKKASKTAENATSGETLEENGAGD. Position 361 is a phosphoserine; by PKC/PRKCD (Ser-361). The segment at 361–375 is interaction with RNA; the sequence is SASRKTQKKKKKKAS. The segment covering 365-375 has biased composition (basic residues); that stretch reads KTQKKKKKKAS. 2 positions are modified to phosphothreonine: Thr-366 and Thr-386.

Belongs to the peptidase M24 family. Isoform 2 interacts with the cytoplasmic domain of non-phosphorylated ERBB3; the interaction requires PKC activity. Interacts with AR. Treatment with HRG leads to dissociation from ERBB3 and increases association with AR. Interacts with nucleolin/NCL. Component of a ribonucleoprotein complex containing at least PA2G4, NCL, TOP1, PABPC2, RPLP0, acetylated histone H1 (HIST1H1A or H1F1), histone H1 2/4, RPL4, RPL8, RPL15, RPL18, RPL18A, RPL21, RPL11, RPL12, RPL28, RPL27, RPLP2 and RPL24. Interacts with HDAC2. Interacts with RB1; the interaction is enhanced upon PA2G4 dephosphorylation. Isoform 1 and isoform 2 interact with RNF20. Isoform 2 interacts with HUWE1. Interacts with AKT1. Interacts with DNAJC21. In terms of processing, phosphorylated on serine and threonine residues. Phosphorylation is enhanced by HRG treatment. Basal phosphorylation is PKC-dependent and HRG-induced phosphorylation is predominantly PKC-independent. Phosphorylation at Ser-361 by PKC/PRKCD regulates its nucleolar localization. Post-translationally, isoform 2 is polyubiquitinated, leading to proteasomal degradation and phosphorylation by PKC/PRKCD enhances polyubiquitination.

The protein resides in the cytoplasm. It is found in the nucleus. Its subcellular location is the nucleolus. May play a role in a ERBB3-regulated signal transduction pathway. Seems be involved in growth regulation. Acts a corepressor of the androgen receptor (AR) and is regulated by the ERBB3 ligand neuregulin-1/heregulin (HRG). Inhibits transcription of some E2F1-regulated promoters, probably by recruiting histone acetylase (HAT) activity. Binds RNA. Associates with 28S, 18S and 5.8S mature rRNAs, several rRNA precursors and probably U3 small nucleolar RNA. May be involved in regulation of intermediate and late steps of rRNA processing. May be involved in ribosome assembly. Mediates cap-independent translation of specific viral IRESs (internal ribosomal entry site). Together with PTBP1 is required for the translation initiation on the foot-and-mouth disease virus (FMDV) IRES. Regulates cell proliferation, differentiation, and survival. Isoform 1 suppresses apoptosis whereas isoform 2 promotes cell differentiation. This Rattus norvegicus (Rat) protein is Proliferation-associated protein 2G4 (Pa2g4).